Consider the following 122-residue polypeptide: Holo-[acyl-carrier-protein] synthase (122 aa).

Positions 9 and 58 each coordinate Mg(2+).

The protein belongs to the P-Pant transferase superfamily. AcpS family. It depends on Mg(2+) as a cofactor.

It localises to the cytoplasm. It catalyses the reaction apo-[ACP] + CoA = holo-[ACP] + adenosine 3',5'-bisphosphate + H(+). Its function is as follows. Transfers the 4'-phosphopantetheine moiety from coenzyme A to a Ser of acyl-carrier-protein. The protein is Holo-[acyl-carrier-protein] synthase of Chlamydia pneumoniae (Chlamydophila pneumoniae).